The primary structure comprises 370 residues: Chorismate synthase (370 aa).

Arginine 47 contributes to the NADP(+) binding site. FMN-binding positions include 124–126 (RSS), glycine 286, 301–305 (KPTAT), and arginine 327.

This sequence belongs to the chorismate synthase family. As to quaternary structure, homotetramer. It depends on FMNH2 as a cofactor.

It catalyses the reaction 5-O-(1-carboxyvinyl)-3-phosphoshikimate = chorismate + phosphate. The protein operates within metabolic intermediate biosynthesis; chorismate biosynthesis; chorismate from D-erythrose 4-phosphate and phosphoenolpyruvate: step 7/7. Its function is as follows. Catalyzes the anti-1,4-elimination of the C-3 phosphate and the C-6 proR hydrogen from 5-enolpyruvylshikimate-3-phosphate (EPSP) to yield chorismate, which is the branch point compound that serves as the starting substrate for the three terminal pathways of aromatic amino acid biosynthesis. This reaction introduces a second double bond into the aromatic ring system. This chain is Chorismate synthase, found in Trichodesmium erythraeum (strain IMS101).